The primary structure comprises 199 residues: Interleukin-11 (199 aa).

Residues 1–21 (MNCVCRLVLVVLSLWPDRVVA) form the signal peptide. An important for interaction with IL11RA and for the stimulation of cell proliferation region spans residues 182–190 (HLTLDWAVR).

This sequence belongs to the IL-6 superfamily. Interacts with IL11RA to associate with IL6ST, giving rise to a multimeric signaling complex.

The protein localises to the secreted. Cytokine that stimulates the proliferation of hematopoietic stem cells and megakaryocyte progenitor cells and induces megakaryocyte maturation resulting in increased platelet production. Also promotes the proliferation of hepatocytes in response to liver damage. Binding to its receptor formed by IL6ST and IL11RA activates a signaling cascade that promotes cell proliferation. Signaling leads to the activation of intracellular protein kinases and the phosphorylation of STAT3. The interaction with the membrane-bound IL11RA and IL6ST stimulates 'classic signaling', whereas the binding of IL11 and soluble IL11RA to IL6ST stimulates 'trans-signaling'. The polypeptide is Interleukin-11 (Rattus norvegicus (Rat)).